A 273-amino-acid chain; its full sequence is Putative phosphoenolpyruvate synthase regulatory protein (273 aa).

Position 154–161 (154–161) interacts with ADP; sequence GVSRSGKT.

Belongs to the pyruvate, phosphate/water dikinase regulatory protein family. PSRP subfamily.

The catalysed reaction is [pyruvate, water dikinase] + ADP = [pyruvate, water dikinase]-phosphate + AMP + H(+). It catalyses the reaction [pyruvate, water dikinase]-phosphate + phosphate + H(+) = [pyruvate, water dikinase] + diphosphate. Functionally, bifunctional serine/threonine kinase and phosphorylase involved in the regulation of the phosphoenolpyruvate synthase (PEPS) by catalyzing its phosphorylation/dephosphorylation. The chain is Putative phosphoenolpyruvate synthase regulatory protein from Neisseria meningitidis serogroup B (strain ATCC BAA-335 / MC58).